Consider the following 66-residue polypeptide: Large ribosomal subunit protein uL29 (66 aa).

Belongs to the universal ribosomal protein uL29 family.

The chain is Large ribosomal subunit protein uL29 from Francisella tularensis subsp. tularensis (strain FSC 198).